The primary structure comprises 117 residues: Large ribosomal subunit protein bL20 (117 aa).

Belongs to the bacterial ribosomal protein bL20 family.

In terms of biological role, binds directly to 23S ribosomal RNA and is necessary for the in vitro assembly process of the 50S ribosomal subunit. It is not involved in the protein synthesizing functions of that subunit. The protein is Large ribosomal subunit protein bL20 of Campylobacter fetus subsp. fetus (strain 82-40).